The chain runs to 143 residues: Large ribosomal subunit protein uL11 (143 aa).

Belongs to the universal ribosomal protein uL11 family. In terms of assembly, part of the ribosomal stalk of the 50S ribosomal subunit. Interacts with L10 and the large rRNA to form the base of the stalk. L10 forms an elongated spine to which L12 dimers bind in a sequential fashion forming a multimeric L10(L12)X complex. In terms of processing, one or more lysine residues are methylated.

In terms of biological role, forms part of the ribosomal stalk which helps the ribosome interact with GTP-bound translation factors. This Bordetella pertussis (strain Tohama I / ATCC BAA-589 / NCTC 13251) protein is Large ribosomal subunit protein uL11.